Consider the following 363-residue polypeptide: MSLQHFIQDALSQWMKQKGPESDIVLSSRIRLARNLEHVRFPTQFSQEEAQAVLQQFEQKFASQEVKDIGNFVLIRMNETQPLAKRVLVEKHLISPNLAESRFGGCLLSENEEISVMLNEEDHIRIQCLFPGFQLANALKAANQIDDWIEEQVDYAFSEKRGYLTSCPTNVGTGIRASVMMHLPALALTRQMNRIIPAINQLGLVVRGIYGEGSEAIGNIFQISNQMTLGQSEEDIVDDLNSVTAQLIEQERSARKALYQTSKIELEDRVYRSLGILSNCRMIESKETAKCLSDVRLGIDLGIIKGLSSNILNELMILTQPGFLQQYSGGALEPNERDIKRAAIIRERLRLEMHRNGQEDETI.

In terms of domain architecture, Phosphagen kinase C-terminal spans 24 to 254 (IVLSSRIRLA…AQLIEQERSA (231 aa)). ATP is bound by residues 27–31 (SSRIR), histidine 92, arginine 125, 176–180 (RASVM), and 207–212 (RGIYGE). The RDXXRA motif of the pArg binding pocket involved in allosteric regulation motif lies at 337 to 342 (RDIKRA).

It belongs to the ATP:guanido phosphotransferase family.

It catalyses the reaction L-arginyl-[protein] + ATP = N(omega)-phospho-L-arginyl-[protein] + ADP + H(+). With respect to regulation, appears to be allosterically activated by the binding of pArg-containing polypeptides to the pArg-binding pocket localized in the C-terminal domain of McsB. Catalyzes the specific phosphorylation of arginine residues in a large number of proteins. Is part of the bacterial stress response system. Protein arginine phosphorylation has a physiologically important role and is involved in the regulation of many critical cellular processes, such as protein homeostasis, motility, competence, and stringent and stress responses, by regulating gene expression and protein activity. The protein is Protein-arginine kinase of Bacillus pumilus (strain SAFR-032).